The sequence spans 350 residues: S-adenosylmethionine:tRNA ribosyltransferase-isomerase (350 aa).

The protein belongs to the QueA family. In terms of assembly, monomer.

Its subcellular location is the cytoplasm. It catalyses the reaction 7-aminomethyl-7-carbaguanosine(34) in tRNA + S-adenosyl-L-methionine = epoxyqueuosine(34) in tRNA + adenine + L-methionine + 2 H(+). The protein operates within tRNA modification; tRNA-queuosine biosynthesis. In terms of biological role, transfers and isomerizes the ribose moiety from AdoMet to the 7-aminomethyl group of 7-deazaguanine (preQ1-tRNA) to give epoxyqueuosine (oQ-tRNA). In Vibrio vulnificus (strain YJ016), this protein is S-adenosylmethionine:tRNA ribosyltransferase-isomerase.